We begin with the raw amino-acid sequence, 468 residues long: MNPNQKIITIGSASLGLVIFNILLHVASITLGIISVTKDNKVHICNTTEVYNETVRVETVVIPVNNTIYLNHEPEFLNNTEPLCDVSGFAIVSKDNGIRIGSRGHIFVIREPFVSCGPSECRTFFLTQGALLNDKHSNNTVKDRSPYRALMSVPLGSSPNAYQAKFESVGWSATACHDGKKWMAIGVSGADDDAYAVIHYGGVPTDVIRSWRKQILRTQESSCVCIKGECYWVMTDGPANNQASYKIFKSQKGMVVDEKEISFQGGHIEECSCYPNMGKVECVCRDNWNGMNRPILIFDEKLEYEVGYLCAGIPTDTPRVQDSSFTGSCTNAVGRSGTNNYGVKGFGFRQGNSVWAGRTISVSSRSGFEVLLIEDGWIRPSKTISKKVEVLNNKNWSGYSGAFTIPTAMTSKNCIVPCFWLEMIRGKPEERTSIWTSSSSTVFCGVSSEVPGWSWDDGAILPFDIDKM.

The Intravirion portion of the chain corresponds to 1-15 (MNPNQKIITIGSASL). Residues 11–33 (GSASLGLVIFNILLHVASITLGI) are involved in apical transport and lipid raft association. Residues 16 to 36 (GLVIFNILLHVASITLGIISV) traverse the membrane as a helical segment. The interval 36-80 (VTKDNKVHICNTTEVYNETVRVETVVIPVNNTIYLNHEPEFLNNT) is hypervariable stalk region. The Virion surface segment spans residues 37 to 468 (TKDNKVHICN…AILPFDIDKM (432 aa)). 4 N-linked (GlcNAc...) asparagine; by host glycosylation sites follow: N46, N52, N65, and N78. Positions 83–468 (LCDVSGFAIV…AILPFDIDKM (386 aa)) are head of neuraminidase. 8 disulfide bridges follow: C84–C414, C116–C121, C176–C223, C225–C230, C271–C284, C273–C282, C310–C329, and C418–C444. R110 lines the substrate pocket. N138 carries an N-linked (GlcNAc...) asparagine; by host glycan. Residue D143 is the Proton donor/acceptor of the active site. Position 144 (R144) interacts with substrate. Position 269–270 (269–270 (EE)) interacts with substrate. R285 lines the substrate pocket. The Ca(2+) site is built by D286, G290, and D316. R365 provides a ligand contact to substrate. Residue N395 is glycosylated (N-linked (GlcNAc...) asparagine; by host). Catalysis depends on Y399, which acts as the Nucleophile.

The protein belongs to the glycosyl hydrolase 34 family. As to quaternary structure, homotetramer. Requires Ca(2+) as cofactor. N-glycosylated.

The protein resides in the virion membrane. It localises to the host apical cell membrane. The enzyme catalyses Hydrolysis of alpha-(2-&gt;3)-, alpha-(2-&gt;6)-, alpha-(2-&gt;8)- glycosidic linkages of terminal sialic acid residues in oligosaccharides, glycoproteins, glycolipids, colominic acid and synthetic substrates.. Its activity is regulated as follows. Inhibited by the neuraminidase inhibitors zanamivir (Relenza) and oseltamivir (Tamiflu). These drugs interfere with the release of progeny virus from infected cells and are effective against all influenza strains. Resistance to neuraminidase inhibitors is quite rare. Functionally, catalyzes the removal of terminal sialic acid residues from viral and cellular glycoconjugates. Cleaves off the terminal sialic acids on the glycosylated HA during virus budding to facilitate virus release. Additionally helps virus spread through the circulation by further removing sialic acids from the cell surface. These cleavages prevent self-aggregation and ensure the efficient spread of the progeny virus from cell to cell. Otherwise, infection would be limited to one round of replication. Described as a receptor-destroying enzyme because it cleaves a terminal sialic acid from the cellular receptors. May facilitate viral invasion of the upper airways by cleaving the sialic acid moieties on the mucin of the airway epithelial cells. Likely to plays a role in the budding process through its association with lipid rafts during intracellular transport. May additionally display a raft-association independent effect on budding. Plays a role in the determination of host range restriction on replication and virulence. Sialidase activity in late endosome/lysosome traffic seems to enhance virus replication. The protein is Neuraminidase of Aves.